Reading from the N-terminus, the 576-residue chain is 9-cis-epoxycarotenoid dioxygenase NCED2, chloroplastic (576 aa).

The N-terminal 34 residues, 1-34, are a transit peptide targeting the chloroplast; sequence MEVPIAAMTFAHPANVMTLASRQPKSKRSHISPA. Fe cation-binding residues include histidine 270, histidine 319, histidine 385, and histidine 563.

It belongs to the carotenoid oxygenase family. Requires Fe(2+) as cofactor.

It localises to the plastid. The protein resides in the chloroplast. It catalyses the reaction a 9-cis-epoxycarotenoid + O2 = a 12'-apo-carotenal + 2-cis,4-trans-xanthoxin. It carries out the reaction 9-cis-violaxanthin + O2 = (3S,5R,6S)-5,6-epoxy-3-hydroxy-5,6-dihydro-12'-apo-beta-caroten-12'-al + 2-cis,4-trans-xanthoxin. The catalysed reaction is 9'-cis-neoxanthin + O2 = (3S,5R,6R)-3,5-dihydroxy-6,7-didehydro-5,6-dihydro-12'-apo-beta-caroten-12'-al + 2-cis,4-trans-xanthoxin. In terms of biological role, has a 11,12(11',12') 9-cis epoxycarotenoid cleavage activity. Catalyzes the first step of abscisic-acid biosynthesis from carotenoids. This is 9-cis-epoxycarotenoid dioxygenase NCED2, chloroplastic from Oryza sativa subsp. japonica (Rice).